The following is a 112-amino-acid chain: UPF0060 membrane protein Arth_4238 (112 aa).

A run of 4 helical transmembrane segments spans residues 7-27 (ILLF…VWQA), 33-53 (EWWW…AATL), 62-82 (ILAA…MVFD), and 88-108 (RWDI…MFAP).

Belongs to the UPF0060 family.

The protein localises to the cell membrane. The polypeptide is UPF0060 membrane protein Arth_4238 (Arthrobacter sp. (strain FB24)).